A 248-amino-acid chain; its full sequence is Small ribosomal subunit protein uS3 (248 aa).

The region spanning 39–108 is the KH type-2 domain; that stretch reads IRKLVDKKLS…TVAVNVAEIP (70 aa). A disordered region spans residues 214–248; that stretch reads ETIARPQRRNDERRPEGGDRANRRRPTARRRAGGE. A compositionally biased stretch (basic and acidic residues) spans 221-234; sequence RRNDERRPEGGDRA. Residues 235 to 248 show a composition bias toward basic residues; the sequence is NRRRPTARRRAGGE.

The protein belongs to the universal ribosomal protein uS3 family. As to quaternary structure, part of the 30S ribosomal subunit. Forms a tight complex with proteins S10 and S14.

Its function is as follows. Binds the lower part of the 30S subunit head. Binds mRNA in the 70S ribosome, positioning it for translation. This chain is Small ribosomal subunit protein uS3, found in Deinococcus deserti (strain DSM 17065 / CIP 109153 / LMG 22923 / VCD115).